The sequence spans 291 residues: Nucleotide-binding protein Cthe_0113 (291 aa).

Position 8–15 (8–15 (GISGAGKS)) interacts with ATP. 59 to 62 (DIRG) provides a ligand contact to GTP.

It belongs to the RapZ-like family.

Its function is as follows. Displays ATPase and GTPase activities. This is Nucleotide-binding protein Cthe_0113 from Acetivibrio thermocellus (strain ATCC 27405 / DSM 1237 / JCM 9322 / NBRC 103400 / NCIMB 10682 / NRRL B-4536 / VPI 7372) (Clostridium thermocellum).